Reading from the N-terminus, the 222-residue chain is Ribosome maturation factor RimM (222 aa).

The segment at 1–22 (MTERKQGAARPLNRPLVQPQGE) is disordered. The PRC barrel domain maps to 145-222 (EDEFYWVDLI…RIVVDWGLDY (78 aa)).

Belongs to the RimM family. In terms of assembly, binds ribosomal protein uS19.

It is found in the cytoplasm. Its function is as follows. An accessory protein needed during the final step in the assembly of 30S ribosomal subunit, possibly for assembly of the head region. Essential for efficient processing of 16S rRNA. May be needed both before and after RbfA during the maturation of 16S rRNA. It has affinity for free ribosomal 30S subunits but not for 70S ribosomes. In Cupriavidus necator (strain ATCC 17699 / DSM 428 / KCTC 22496 / NCIMB 10442 / H16 / Stanier 337) (Ralstonia eutropha), this protein is Ribosome maturation factor RimM.